A 212-amino-acid polypeptide reads, in one-letter code: ATP phosphoribosyltransferase (212 aa).

Belongs to the ATP phosphoribosyltransferase family. Short subfamily. In terms of assembly, heteromultimer composed of HisG and HisZ subunits.

Its subcellular location is the cytoplasm. It catalyses the reaction 1-(5-phospho-beta-D-ribosyl)-ATP + diphosphate = 5-phospho-alpha-D-ribose 1-diphosphate + ATP. The protein operates within amino-acid biosynthesis; L-histidine biosynthesis; L-histidine from 5-phospho-alpha-D-ribose 1-diphosphate: step 1/9. Catalyzes the condensation of ATP and 5-phosphoribose 1-diphosphate to form N'-(5'-phosphoribosyl)-ATP (PR-ATP). Has a crucial role in the pathway because the rate of histidine biosynthesis seems to be controlled primarily by regulation of HisG enzymatic activity. The chain is ATP phosphoribosyltransferase from Citrifermentans bemidjiense (strain ATCC BAA-1014 / DSM 16622 / JCM 12645 / Bem) (Geobacter bemidjiensis).